Consider the following 764-residue polypeptide: Protein Lines homolog 1 (764 aa).

2 disordered regions span residues 615–668 and 682–702; these read SQSQ…TSLC and WEEQ…SSPF. A compositionally biased stretch (acidic residues) spans 645–654; sequence DSSEASEEET. Ser650 carries the phosphoserine modification. A compositionally biased stretch (polar residues) spans 658 to 668; it reads HLANSKQTSLC. Low complexity predominate over residues 691–702; the sequence is EPLLSAESSSPF.

This sequence belongs to the protein lines family.

In Mus musculus (Mouse), this protein is Protein Lines homolog 1.